The primary structure comprises 442 residues: Serine--tRNA ligase (442 aa).

T244–E246 lines the L-serine pocket. Residue R275 to E277 participates in ATP binding. Residue E298 participates in L-serine binding. E365–S368 contacts ATP. L-serine is bound at residue S400.

It belongs to the class-II aminoacyl-tRNA synthetase family. Type-1 seryl-tRNA synthetase subfamily. Homodimer. The tRNA molecule binds across the dimer.

Its subcellular location is the cytoplasm. It carries out the reaction tRNA(Ser) + L-serine + ATP = L-seryl-tRNA(Ser) + AMP + diphosphate + H(+). The enzyme catalyses tRNA(Sec) + L-serine + ATP = L-seryl-tRNA(Sec) + AMP + diphosphate + H(+). It functions in the pathway aminoacyl-tRNA biosynthesis; selenocysteinyl-tRNA(Sec) biosynthesis; L-seryl-tRNA(Sec) from L-serine and tRNA(Sec): step 1/1. In terms of biological role, catalyzes the attachment of serine to tRNA(Ser). Is also able to aminoacylate tRNA(Sec) with serine, to form the misacylated tRNA L-seryl-tRNA(Sec), which will be further converted into selenocysteinyl-tRNA(Sec). This is Serine--tRNA ligase from Bradyrhizobium sp. (strain ORS 278).